Reading from the N-terminus, the 337-residue chain is Heme A synthase (337 aa).

5 helical membrane-spanning segments follow: residues 6–26 (ITKW…IGGI), 87–107 (FIHR…VIYF), 119–139 (LPYI…WYMV), 154–174 (LAFH…QLIK), and 192–212 (LIFS…GALV). Position 256 (H256) interacts with heme. 3 helical membrane passes run 258-278 (LVGY…LKIE), 285-305 (IAYF…ITLL), and 308-328 (VPII…SVII). H316 contributes to the heme binding site.

It belongs to the COX15/CtaA family. Type 2 subfamily. In terms of assembly, interacts with CtaB. Heme b is required as a cofactor.

The protein localises to the cell membrane. The catalysed reaction is Fe(II)-heme o + 2 A + H2O = Fe(II)-heme a + 2 AH2. Its pathway is porphyrin-containing compound metabolism; heme A biosynthesis; heme A from heme O: step 1/1. Its function is as follows. Catalyzes the conversion of heme O to heme A by two successive hydroxylations of the methyl group at C8. The first hydroxylation forms heme I, the second hydroxylation results in an unstable dihydroxymethyl group, which spontaneously dehydrates, resulting in the formyl group of heme A. This is Heme A synthase from Rickettsia rickettsii (strain Iowa).